The chain runs to 306 residues: UDP-N-acetylenolpyruvoylglucosamine reductase (306 aa).

One can recognise an FAD-binding PCMH-type domain in the interval 33 to 197; it reads TGGEADFYLS…LEAAFTLEPG (165 aa). Residue Arg176 is part of the active site. The active-site Proton donor is the Ser226. Glu296 is an active-site residue.

The protein belongs to the MurB family. It depends on FAD as a cofactor.

It is found in the cytoplasm. It catalyses the reaction UDP-N-acetyl-alpha-D-muramate + NADP(+) = UDP-N-acetyl-3-O-(1-carboxyvinyl)-alpha-D-glucosamine + NADPH + H(+). It functions in the pathway cell wall biogenesis; peptidoglycan biosynthesis. In terms of biological role, cell wall formation. This chain is UDP-N-acetylenolpyruvoylglucosamine reductase, found in Staphylococcus epidermidis (strain ATCC 35984 / DSM 28319 / BCRC 17069 / CCUG 31568 / BM 3577 / RP62A).